The chain runs to 244 residues: tRNA (guanine-N(1)-)-methyltransferase (244 aa).

Residues G110 and 129 to 134 contribute to the S-adenosyl-L-methionine site; that span reads IGDYIL.

Belongs to the RNA methyltransferase TrmD family. Homodimer.

Its subcellular location is the cytoplasm. The catalysed reaction is guanosine(37) in tRNA + S-adenosyl-L-methionine = N(1)-methylguanosine(37) in tRNA + S-adenosyl-L-homocysteine + H(+). In terms of biological role, specifically methylates guanosine-37 in various tRNAs. The chain is tRNA (guanine-N(1)-)-methyltransferase from Syntrophomonas wolfei subsp. wolfei (strain DSM 2245B / Goettingen).